The primary structure comprises 336 residues: Ornithine carbamoyltransferase, catabolic (336 aa).

Carbamoyl phosphate-binding positions include 57–60 (STRT), Gln84, Arg108, and 135–138 (HPTQ). L-ornithine is bound by residues Asn168, Asp232, and 236–237 (SM). Carbamoyl phosphate contacts are provided by residues 274–275 (CL) and Arg321.

This sequence belongs to the aspartate/ornithine carbamoyltransferase superfamily. OTCase family.

The protein localises to the cytoplasm. The catalysed reaction is carbamoyl phosphate + L-ornithine = L-citrulline + phosphate + H(+). The protein operates within amino-acid degradation; L-arginine degradation via ADI pathway; carbamoyl phosphate from L-arginine: step 2/2. In terms of biological role, reversibly catalyzes the transfer of the carbamoyl group from carbamoyl phosphate (CP) to the N(epsilon) atom of ornithine (ORN) to produce L-citrulline. The chain is Ornithine carbamoyltransferase, catabolic (arcB) from Ectopseudomonas mendocina (Pseudomonas mendocina).